The chain runs to 478 residues: DNA-directed RNA polymerase II subunit RPB1 (478 aa).

7 residues coordinate Zn(2+): Cys68, Cys71, Cys78, His81, Cys108, Cys111, and Cys149. Residues Asp474 and Asp476 each contribute to the Mg(2+) site.

Belongs to the RNA polymerase beta' chain family. Component of the RNA polymerase II (Pol II) complex consisting of 12 subunits. Phosphorylation activates POL II.

Its subcellular location is the nucleus. The catalysed reaction is RNA(n) + a ribonucleoside 5'-triphosphate = RNA(n+1) + diphosphate. Its function is as follows. DNA-dependent RNA polymerase catalyzes the transcription of DNA into RNA using the four ribonucleoside triphosphates as substrates. Largest and catalytic component of RNA polymerase II which synthesizes mRNA precursors and many functional non-coding RNAs. Forms the polymerase active center together with the second largest subunit. Pol II is the central component of the basal RNA polymerase II transcription machinery. It is composed of mobile elements that move relative to each other. RPB1 is part of the core element with the central large cleft, the clamp element that moves to open and close the cleft and the jaws that are thought to grab the incoming DNA template. At the start of transcription, a single-stranded DNA template strand of the promoter is positioned within the central active site cleft of Pol II. A bridging helix emanates from RPB1 and crosses the cleft near the catalytic site and is thought to promote translocation of Pol II by acting as a ratchet that moves the RNA-DNA hybrid through the active site by switching from straight to bent conformations at each step of nucleotide addition. During transcription elongation, Pol II moves on the template as the transcript elongates. Elongation is influenced by the phosphorylation status of the C-terminal domain (CTD) of Pol II largest subunit (RPB1), which serves as a platform for assembly of factors that regulate transcription initiation, elongation, termination and mRNA processing. The polypeptide is DNA-directed RNA polymerase II subunit RPB1 (RPB1) (Euplotoides octocarinatus (Freshwater ciliate)).